Reading from the N-terminus, the 476-residue chain is Deoxyguanosinetriphosphate triphosphohydrolase-like protein 2 (476 aa).

The interval M1–K20 is disordered. The HD domain maps to R60 to S233.

Belongs to the dGTPase family. Type 2 subfamily.

This Mesorhizobium japonicum (strain LMG 29417 / CECT 9101 / MAFF 303099) (Mesorhizobium loti (strain MAFF 303099)) protein is Deoxyguanosinetriphosphate triphosphohydrolase-like protein 2.